We begin with the raw amino-acid sequence, 344 residues long: Trace amine-associated receptor 8b (344 aa).

Residues 1–33 (MTSNFSQATLQLCYENVNASCIKTPYSPGLRVL) lie on the Extracellular side of the membrane. N-linked (GlcNAc...) asparagine glycosylation is found at asparagine 4 and asparagine 18. 2 disulfides stabilise this stretch: cysteine 21–cysteine 185 and cysteine 104–cysteine 189. The chain crosses the membrane as a helical span at residues 34-54 (LYMVFGFGAVLAVCGNLLVVI). Over 55-67 (SVLHFKQLHSPAN) the chain is Cytoplasmic. Residues 68–88 (FLIASLASADFLVGISVMPFS) form a helical membrane-spanning segment. Topologically, residues 89-102 (MVRSIESCWYFGDT) are extracellular. The chain crosses the membrane as a helical span at residues 103 to 127 (FCSLHSCCDAAFCYSSLFHLCFISV). The Cytoplasmic portion of the chain corresponds to 128 to 146 (DRYIAVTEPLVYPTKFTMS). A helical transmembrane segment spans residues 147 to 167 (VSGICISISWILPLVYSSAVF). The Extracellular segment spans residues 168–196 (YTGISATGIENLVSALNCVGGCQVAINQD). Residues 197–217 (WVLISFLLFFIPTLVMIILYS) form a helical membrane-spanning segment. At 218–256 (KIFLVAKQQAVKIETSISGSKGESSLESHKARVAKRERK) the chain is on the cytoplasmic side. A helical membrane pass occupies residues 257-277 (AAKTLGVTVMAFMVSWLPYTI). Over 278–295 (DTLIDAFMGFITPAYVYE) the chain is Extracellular. A helical transmembrane segment spans residues 296–319 (ICGWIAYYNSAMNPLIYAFFYPWF). Residues 320–344 (RKAIKLILSGKILKGHSSTTSLFSE) are Cytoplasmic-facing.

The protein belongs to the G-protein coupled receptor 1 family.

It localises to the cell membrane. Its function is as follows. Olfactory receptor activated by trace amines. Trace amine compounds are enriched in animal body fluids and act on trace amine-associated receptors (TAARs) to elicit both intraspecific and interspecific innate behaviors. Ligand-binding causes a conformation change that triggers signaling via G(s)-class of G alpha proteins (GNAL or GNAS). This chain is Trace amine-associated receptor 8b, found in Rattus norvegicus (Rat).